A 212-amino-acid chain; its full sequence is Ribonuclease HII (212 aa).

Positions 1-206 (MARFGVDEAG…SRDALGAAEQ (206 aa)) constitute an RNase H type-2 domain. Positions 7, 8, and 100 each coordinate a divalent metal cation.

Belongs to the RNase HII family. Mn(2+) is required as a cofactor. Requires Mg(2+) as cofactor.

The protein resides in the cytoplasm. The catalysed reaction is Endonucleolytic cleavage to 5'-phosphomonoester.. Its function is as follows. Endonuclease that specifically degrades the RNA of RNA-DNA hybrids. This is Ribonuclease HII from Halobacterium salinarum (strain ATCC 29341 / DSM 671 / R1).